A 196-amino-acid polypeptide reads, in one-letter code: NADH-quinone oxidoreductase subunit I (196 aa).

2 consecutive 4Fe-4S ferredoxin-type domains span residues 54-84 (LNRW…VEGA) and 104-133 (RVYQ…MTNE). Residues cysteine 64, cysteine 67, cysteine 70, cysteine 74, cysteine 113, cysteine 116, cysteine 119, and cysteine 123 each coordinate [4Fe-4S] cluster.

This sequence belongs to the complex I 23 kDa subunit family. In terms of assembly, NDH-1 is composed of 14 different subunits. Subunits NuoA, H, J, K, L, M, N constitute the membrane sector of the complex. The cofactor is [4Fe-4S] cluster.

It is found in the cell membrane. It catalyses the reaction a quinone + NADH + 5 H(+)(in) = a quinol + NAD(+) + 4 H(+)(out). In terms of biological role, NDH-1 shuttles electrons from NADH, via FMN and iron-sulfur (Fe-S) centers, to quinones in the respiratory chain. The immediate electron acceptor for the enzyme in this species is believed to be ubiquinone. Couples the redox reaction to proton translocation (for every two electrons transferred, four hydrogen ions are translocated across the cytoplasmic membrane), and thus conserves the redox energy in a proton gradient. This Nocardioides sp. (strain ATCC BAA-499 / JS614) protein is NADH-quinone oxidoreductase subunit I.